Consider the following 692-residue polypeptide: Threonine--tRNA ligase (692 aa).

A TGS domain is found at 2-59 (AEAHISITVNGEAKEVEASQTGVELFADDKNIIAVRLNGELRDLYTPLHDGDNVESVT). The catalytic stretch occupies residues 255–561 (DHRKLGQEMD…LLEHYAGAFP (307 aa)). Zn(2+) contacts are provided by cysteine 360, histidine 411, and histidine 538.

The protein belongs to the class-II aminoacyl-tRNA synthetase family. As to quaternary structure, homodimer. Zn(2+) is required as a cofactor.

It is found in the cytoplasm. It carries out the reaction tRNA(Thr) + L-threonine + ATP = L-threonyl-tRNA(Thr) + AMP + diphosphate + H(+). Functionally, catalyzes the attachment of threonine to tRNA(Thr) in a two-step reaction: L-threonine is first activated by ATP to form Thr-AMP and then transferred to the acceptor end of tRNA(Thr). Also edits incorrectly charged L-seryl-tRNA(Thr). This chain is Threonine--tRNA ligase, found in Bifidobacterium animalis subsp. lactis (strain AD011).